Consider the following 210-residue polypeptide: Fibroblast growth factor 8 (210 aa).

The N-terminal stretch at 1–27 (MRLIPSRLSYLFLHLFAFCYYAQVTIQ) is a signal peptide.

It belongs to the heparin-binding growth factors family. As to quaternary structure, monomer. Homodimer.

The protein localises to the secreted. Functionally, plays an important role in the regulation of embryonic development, cell proliferation, cell differentiation and cell migration. Required for Kupffer's vesicle ciliogenesis. This is Fibroblast growth factor 8 from Danio rerio (Zebrafish).